The following is a 430-amino-acid chain: Cortical fragment-lytic enzyme (430 aa).

LysM domains lie at 3-47 and 52-96; these read QIVT…ALIV and NNYY…QLYI. Residues 104–430 form the GH18 domain; it reads VESIAYLQPS…VENFTITKKG (327 aa). The Proton donor role is filled by Glu-219.

It belongs to the glycosyl hydrolase 18 family. Chitinase class II subfamily.

The protein localises to the forespore. N-acetylglucosaminidase involved in cortex peptidoglycan degradation during germination. Cleaves only partially degraded spore peptidoglycans. Recognizes muramic acid delta-lactam residues specific to spore peptidoglycans. This is Cortical fragment-lytic enzyme from Bacillus anthracis.